Here is an 87-residue protein sequence, read N- to C-terminus: NAD(P)H-quinone oxidoreductase subunit O (87 aa).

The span at 1–10 shows a compositional bias: basic and acidic residues; the sequence is MSEQTGKVDD. Residues 1-26 form a disordered region; the sequence is MSEQTGKVDDSQSPPKVQKKLRKGDL.

Belongs to the complex I NdhO subunit family. In terms of assembly, NDH-1 can be composed of about 15 different subunits; different subcomplexes with different compositions have been identified which probably have different functions.

Its subcellular location is the cellular thylakoid membrane. It carries out the reaction a plastoquinone + NADH + (n+1) H(+)(in) = a plastoquinol + NAD(+) + n H(+)(out). The enzyme catalyses a plastoquinone + NADPH + (n+1) H(+)(in) = a plastoquinol + NADP(+) + n H(+)(out). Functionally, NDH-1 shuttles electrons from an unknown electron donor, via FMN and iron-sulfur (Fe-S) centers, to quinones in the respiratory and/or the photosynthetic chain. The immediate electron acceptor for the enzyme in this species is believed to be plastoquinone. Couples the redox reaction to proton translocation, and thus conserves the redox energy in a proton gradient. Cyanobacterial NDH-1 also plays a role in inorganic carbon-concentration. The protein is NAD(P)H-quinone oxidoreductase subunit O of Prochlorococcus marinus (strain NATL1A).